A 546-amino-acid polypeptide reads, in one-letter code: Germacrene-D synthase (546 aa).

Mg(2+) contacts are provided by Asp303, Asp307, Asp448, and Glu456. Positions 303 to 307 match the DDXXD motif motif; that stretch reads DDIYD.

Belongs to the terpene synthase family. It depends on Mg(2+) as a cofactor. Mn(2+) serves as cofactor.

It carries out the reaction (2E,6E)-farnesyl diphosphate = (-)-germacrene D + diphosphate. It participates in secondary metabolite biosynthesis; terpenoid biosynthesis. In terms of biological role, sesquiterpene synthase that catalyzes the formation of germacrene D from trans,trans-farnesyl diphosphate (FPP). This Ocimum basilicum (Sweet basil) protein is Germacrene-D synthase (GDS).